The primary structure comprises 37 residues: MMTTLLPVFTKPSPLALNALRAGRICRFLLIPDGRIR.

In Escherichia coli (strain K12), this protein is Protein YhiY.